Consider the following 251-residue polypeptide: Probable transcriptional regulatory protein Arth_2304 (251 aa).

This sequence belongs to the TACO1 family.

It is found in the cytoplasm. The chain is Probable transcriptional regulatory protein Arth_2304 from Arthrobacter sp. (strain FB24).